The following is a 362-amino-acid chain: Protein RecA (362 aa).

77–84 lines the ATP pocket; the sequence is GPESSGKT.

The protein belongs to the RecA family.

The protein localises to the cytoplasm. Can catalyze the hydrolysis of ATP in the presence of single-stranded DNA, the ATP-dependent uptake of single-stranded DNA by duplex DNA, and the ATP-dependent hybridization of homologous single-stranded DNAs. It interacts with LexA causing its activation and leading to its autocatalytic cleavage. This chain is Protein RecA, found in Allorhizobium ampelinum (strain ATCC BAA-846 / DSM 112012 / S4) (Agrobacterium vitis (strain S4)).